We begin with the raw amino-acid sequence, 250 residues long: Ubiquinone/menaquinone biosynthesis C-methyltransferase UbiE (250 aa).

S-adenosyl-L-methionine is bound by residues Thr-74, Asp-94, 122–123, and Ser-139; that span reads DA.

It belongs to the class I-like SAM-binding methyltransferase superfamily. MenG/UbiE family.

The enzyme catalyses a 2-demethylmenaquinol + S-adenosyl-L-methionine = a menaquinol + S-adenosyl-L-homocysteine + H(+). The catalysed reaction is a 2-methoxy-6-(all-trans-polyprenyl)benzene-1,4-diol + S-adenosyl-L-methionine = a 5-methoxy-2-methyl-3-(all-trans-polyprenyl)benzene-1,4-diol + S-adenosyl-L-homocysteine + H(+). The protein operates within quinol/quinone metabolism; menaquinone biosynthesis; menaquinol from 1,4-dihydroxy-2-naphthoate: step 2/2. It participates in cofactor biosynthesis; ubiquinone biosynthesis. Functionally, methyltransferase required for the conversion of demethylmenaquinol (DMKH2) to menaquinol (MKH2) and the conversion of 2-polyprenyl-6-methoxy-1,4-benzoquinol (DDMQH2) to 2-polyprenyl-3-methyl-6-methoxy-1,4-benzoquinol (DMQH2). The chain is Ubiquinone/menaquinone biosynthesis C-methyltransferase UbiE from Roseobacter denitrificans (strain ATCC 33942 / OCh 114) (Erythrobacter sp. (strain OCh 114)).